The sequence spans 312 residues: Pyridoxal kinase (312 aa).

Met-1 carries the post-translational modification N-acetylmethionine. Residues Ser-12 and Thr-47 each coordinate pyridoxal. Thr-47 lines the pyridoxal 5'-phosphate pocket. At Ser-59 the chain carries Phosphoserine. ATP is bound at residue Asp-113. Asp-113 provides a ligand contact to Na(+). Asp-118 is a binding site for Mg(2+). Residue Thr-148 participates in Na(+) binding. An ATP-binding site is contributed by 150-153; that stretch reads NQFE. Ser-164 is modified (phosphoserine). Thr-186 is a Na(+) binding site. 186–187 contacts ATP; that stretch reads TS. Ser-213 is subject to Phosphoserine. ATP is bound by residues 226–228 and Thr-233; that span reads VEA. 234-235 is a pyridoxal 5'-phosphate binding site; the sequence is GD. The active-site Proton acceptor is Asp-235. Ser-285 carries the post-translational modification Phosphoserine.

The protein belongs to the pyridoxine kinase family. Homodimer. The cofactor is Zn(2+). Requires Mg(2+) as cofactor.

Its subcellular location is the cytoplasm. The protein resides in the cytosol. The catalysed reaction is pyridoxal + ATP = pyridoxal 5'-phosphate + ADP + H(+). The enzyme catalyses pyridoxamine + ATP = pyridoxamine 5'-phosphate + ADP + H(+). It carries out the reaction pyridoxine + ATP = pyridoxine 5'-phosphate + ADP + H(+). The protein operates within cofactor metabolism; pyridoxal 5'-phosphate salvage; pyridoxal 5'-phosphate from pyridoxal: step 1/1. Its pathway is cofactor metabolism; pyridoxal 5'-phosphate salvage; pyridoxine 5'-phosphate from pyridoxine: step 1/1. It participates in cofactor metabolism; pyridoxal 5'-phosphate salvage; pyridoxamine 5'-phosphate from pyridoxamine: step 1/1. Activity is increased in the presence of K(+)or Na(+). Its function is as follows. Catalyzes the phosphorylation of the dietary vitamin B6 vitamers pyridoxal (PL), pyridoxine (PN) and pyridoxamine (PM) to form pyridoxal 5'-phosphate (PLP), pyridoxine 5'-phosphate (PNP) and pyridoxamine 5'-phosphate (PMP), respectively. PLP is the active form of vitamin B6, and acts as a cofactor for over 140 different enzymatic reactions. The sequence is that of Pyridoxal kinase from Mus musculus (Mouse).